A 642-amino-acid chain; its full sequence is Putative ankyrin repeat protein L91 (642 aa).

14 ANK repeats span residues 42 to 76 (HFTKLMYLIINEKNSTNGHQKIIKYLKKKINVKNP), 85 to 118 (EGWTALMIASITCGQWCSIETVRLLLEHGANPNI), 153 to 186 (NGFTALSLACAVLDTGESVEVVELLLKYGTNVDS), 190 to 224 (NGETALIITCQNSKYFHSIFVIDLLLQNNANTLHK), 227 to 256 (NGFTALIHAVSHCPLNIVKLLVKNGSDVNA), 260 to 288 (EGKSVLMHSTKNSIDIVKYLLKKGAEINH), 292 to 322 (NDINVLFFASKNHVKSDVIMFLLAKCSNPNE), 326 to 360 (NKNAVLAHVCRQFNHHKNDIDTVKILLENRANPNI), 365 to 397 (SRTILMDICTDYQNENSLDIIEMLLKKGANVNA), 401 to 434 (EGRTALNYACMSINNKITIKIIKLLLKYNINVNH), 438 to 470 (DGAHILIDLCRNYSRYSLKVVKLLLEHGADVNI), 475 to 514 (KKWTPLFFANENLFSSSEKDPERCTKLIDLLIHYGANVNA), 518 to 550 (YGNNILMEDTTRNLECPNSITKHLLEKKINVNH), and 554 to 587 (NGDTSLLLVYERHELERAYSIAQFLLEHGCNPNI).

This Acanthamoeba polyphaga (Amoeba) protein is Putative ankyrin repeat protein L91.